Consider the following 471-residue polypeptide: Ribulose bisphosphate carboxylase large chain (471 aa).

The substrate site is built by Asn115 and Thr165. Catalysis depends on Lys167, which acts as the Proton acceptor. Lys169 is a substrate binding site. Lys193, Asp195, and Glu196 together coordinate Mg(2+). At Lys193 the chain carries N6-carboxylysine. The Proton acceptor role is filled by His286. Residues Arg287, His319, and Ser371 each contribute to the substrate site.

Belongs to the RuBisCO large chain family. Type I subfamily. Heterohexadecamer of 8 large chains and 8 small chains. The cofactor is Mg(2+).

It carries out the reaction 2 (2R)-3-phosphoglycerate + 2 H(+) = D-ribulose 1,5-bisphosphate + CO2 + H2O. It catalyses the reaction D-ribulose 1,5-bisphosphate + O2 = 2-phosphoglycolate + (2R)-3-phosphoglycerate + 2 H(+). Its function is as follows. RuBisCO catalyzes two reactions: the carboxylation of D-ribulose 1,5-bisphosphate, the primary event in carbon dioxide fixation, as well as the oxidative fragmentation of the pentose substrate. Both reactions occur simultaneously and in competition at the same active site. In Alvinoconcha hessleri symbiotic bacterium, this protein is Ribulose bisphosphate carboxylase large chain.